The following is a 119-amino-acid chain: Large ribosomal subunit protein bL12 (119 aa).

This sequence belongs to the bacterial ribosomal protein bL12 family. As to quaternary structure, homodimer. Part of the ribosomal stalk of the 50S ribosomal subunit. Forms a multimeric L10(L12)X complex, where L10 forms an elongated spine to which 2 to 4 L12 dimers bind in a sequential fashion. Binds GTP-bound translation factors.

Functionally, forms part of the ribosomal stalk which helps the ribosome interact with GTP-bound translation factors. Is thus essential for accurate translation. The chain is Large ribosomal subunit protein bL12 from Lysinibacillus sphaericus (strain C3-41).